We begin with the raw amino-acid sequence, 430 residues long: UDP-glucose 6-dehydrogenase AglM (430 aa).

Cys269 is an active-site residue.

This sequence belongs to the UDP-glucose/GDP-mannose dehydrogenase family.

It catalyses the reaction UDP-alpha-D-glucose + 2 NAD(+) + H2O = UDP-alpha-D-glucuronate + 2 NADH + 3 H(+). Its pathway is nucleotide-sugar biosynthesis; UDP-alpha-D-glucuronate biosynthesis; UDP-alpha-D-glucuronate from UDP-alpha-D-glucose: step 1/1. It functions in the pathway cell surface structure biogenesis; S-layer biogenesis. With respect to regulation, activity improves as salinity decreases. In terms of biological role, involved in the assembly of a N-linked pentasaccharide that decorates the S-layer glycoprotein and flagellins. Involved in the biosynthesis of the hexuronic acids found at both positions 2 and 3 of the pentasaccharide. The chain is UDP-glucose 6-dehydrogenase AglM (aglM) from Haloferax volcanii (strain ATCC 29605 / DSM 3757 / JCM 8879 / NBRC 14742 / NCIMB 2012 / VKM B-1768 / DS2) (Halobacterium volcanii).